We begin with the raw amino-acid sequence, 246 residues long: Ubiquinone biosynthesis O-methyltransferase (246 aa).

4 residues coordinate S-adenosyl-L-methionine: arginine 36, glycine 60, aspartate 81, and leucine 123.

Belongs to the methyltransferase superfamily. UbiG/COQ3 family.

The catalysed reaction is a 3-demethylubiquinol + S-adenosyl-L-methionine = a ubiquinol + S-adenosyl-L-homocysteine + H(+). It carries out the reaction a 3-(all-trans-polyprenyl)benzene-1,2-diol + S-adenosyl-L-methionine = a 2-methoxy-6-(all-trans-polyprenyl)phenol + S-adenosyl-L-homocysteine + H(+). It participates in cofactor biosynthesis; ubiquinone biosynthesis. O-methyltransferase that catalyzes the 2 O-methylation steps in the ubiquinone biosynthetic pathway. The polypeptide is Ubiquinone biosynthesis O-methyltransferase (Rickettsia typhi (strain ATCC VR-144 / Wilmington)).